The chain runs to 290 residues: ATP synthase gamma chain (290 aa).

The protein belongs to the ATPase gamma chain family. In terms of assembly, F-type ATPases have 2 components, CF(1) - the catalytic core - and CF(0) - the membrane proton channel. CF(1) has five subunits: alpha(3), beta(3), gamma(1), delta(1), epsilon(1). CF(0) has three main subunits: a, b and c.

It is found in the cell membrane. Produces ATP from ADP in the presence of a proton gradient across the membrane. The gamma chain is believed to be important in regulating ATPase activity and the flow of protons through the CF(0) complex. The protein is ATP synthase gamma chain of Wolbachia pipientis subsp. Culex pipiens (strain wPip).